The following is a 429-amino-acid chain: Adenylosuccinate synthetase (429 aa).

GTP contacts are provided by residues 12–18 (GDEGKGK) and 40–42 (GHT). The active-site Proton acceptor is the D13. Mg(2+) contacts are provided by D13 and G40. Residues 13 to 16 (DEGK), 38 to 41 (NAGH), T128, R142, Q223, T238, and R302 each bind IMP. H41 functions as the Proton donor in the catalytic mechanism. Position 298 to 304 (298 to 304 (TTTGRPR)) interacts with substrate. GTP contacts are provided by residues R304, 330-332 (SID), and 412-414 (SVG).

Belongs to the adenylosuccinate synthetase family. As to quaternary structure, homodimer. Mg(2+) serves as cofactor.

The protein resides in the cytoplasm. The catalysed reaction is IMP + L-aspartate + GTP = N(6)-(1,2-dicarboxyethyl)-AMP + GDP + phosphate + 2 H(+). It participates in purine metabolism; AMP biosynthesis via de novo pathway; AMP from IMP: step 1/2. Functionally, plays an important role in the de novo pathway of purine nucleotide biosynthesis. Catalyzes the first committed step in the biosynthesis of AMP from IMP. This Bacillus cereus (strain ATCC 14579 / DSM 31 / CCUG 7414 / JCM 2152 / NBRC 15305 / NCIMB 9373 / NCTC 2599 / NRRL B-3711) protein is Adenylosuccinate synthetase.